The sequence spans 636 residues: Golgin subfamily A member 8F (636 aa).

Disordered stretches follow at residues 1-72 and 107-127; these read MAEE…SATL and NKQV…KQKA. Residues 38-50 are compositionally biased toward polar residues; sequence TNGSIHETATSGG. 3 coiled-coil regions span residues 93 to 148, 211 to 263, and 306 to 412; these read VSQL…LNTD, LEQS…MSQE, and EVEL…QQKQ. The span at 109 to 127 shows a compositional bias: basic and acidic residues; the sequence is QVEHQLEEEKKANNEKQKA. 4 disordered regions span residues 344-364, 422-449, 496-537, and 588-612; these read LREQ…QEER, ALPG…SIPQ, PITK…GVAA, and PVQG…QDHQ. Residues 429–441 are compositionally biased toward basic and acidic residues; the sequence is GGGHLDSEGEEAP. A compositionally biased stretch (gly residues) spans 509 to 522; sequence PGGGHHQAGPGQGG.

This sequence belongs to the GOLGA8 family.

This is Golgin subfamily A member 8F from Homo sapiens (Human).